A 146-amino-acid chain; its full sequence is UPF0260 protein Ssed_2516 (146 aa).

It belongs to the UPF0260 family.

The chain is UPF0260 protein Ssed_2516 from Shewanella sediminis (strain HAW-EB3).